We begin with the raw amino-acid sequence, 395 residues long: MSSLAPWRTTSWSPLGSPPSLEDALRLARTTRAFAVRRDGEGRALVTYLYGTPELFSLPGARELRGIVYREEDGTVLSRPFHKFFNFGEPLAPGEEAFKAFRDSMVPLFVAEKVDGYLAQAYLDGGELRFASRHSLNPPLVGALLRKAVDEEAMARLGKLLAAEGGRWTALLEVVDPEAPVMVPYQEPGVYLLALRSIGEGHYLLPGVHFPLPEALRYVRWEPRMDFDPHRFRGEIRDLQGVEGYVVTDGAEFVKFKTGWAFRLARFLMDPEGVFLEAYAEDRLDDLVGALAGREDLLRAVARAQDYLAGLYGEAVGAGDALRRMGLPRKEAWARVQEEAGRWGGFAPAYARAAMAAYEGGEAREAFLVELRKRSARKALEALHLFPRVGGELRG.

ATP contacts are provided by Y48, R65, and K83. K113 acts as the N6-AMP-lysine intermediate in catalysis. Residues E173, K255, and K257 each coordinate ATP. A Mg(2+)-binding site is contributed by D285.

Mg(2+) serves as cofactor. It depends on Mn(2+) as a cofactor.

The catalysed reaction is ATP + (ribonucleotide)n-3'-hydroxyl + 5'-phospho-(ribonucleotide)m = (ribonucleotide)n+m + AMP + diphosphate.. Functionally, RNA ligase that ligates single-stranded nucleic acids in an ATP-dependent manner. Catalyzes both inter- and intra-molecular single-stranded DNA (ssDNA) ligation to &gt;50% completion in a matter of hours at an elevated temperature, although favoring intra-molecular ligation on RNA and single-stranded DNA substrates. Is able to catalyze the adenylation reaction of ssDNA 3'-terminal phosphate (ssDNA 3'p) to 3'-adenylated DNA (ssDNA 3'pp5'A). Does not have significant 3'-adenylation activity with a 3'-phosphorylated nicked dsDNA substrate. The polypeptide is RNA ligase 1 (Thermus scotoductus).